A 449-amino-acid polypeptide reads, in one-letter code: Tripartite motif-containing protein 64B (449 aa).

The RING-type zinc finger occupies 15-56; the sequence is CCICVNYFIDPVTIDCGHSFCRPCLCLCSEEGRAPMRCPSCR. The B box-type zinc finger occupies 87–128; it reads SSDNICVLHEETKELFCEADKRLLCGPCSESPEHMAHSHSPI. Residues C92, H95, C114, and H120 each coordinate Zn(2+). Positions 189-225 form a coiled coil; the sequence is LDEEEQRHLQALEREAEELFQQLQDSQVRMTQHLERM. The B30.2/SPRY domain occupies 268-449; sequence ELTSWCITGV…LRPFFCFGCT (182 aa).

The protein belongs to the TRIM/RBCC family.

The polypeptide is Tripartite motif-containing protein 64B (TRIM64B) (Homo sapiens (Human)).